The chain runs to 655 residues: Archaeal Lon protease (655 aa).

Residues 1–123 are Cytoplasmic-facing; sequence MEENIESVEE…KAEREKRDRS (123 aa). 57–64 provides a ligand contact to ATP; sequence GEPGTGKS. The chain crosses the membrane as a helical span at residues 124–144; sequence RSIMFVIFSVVLLGIIAAIVL. Residue arginine 145 is a topological domain, extracellular. Residues 146–166 traverse the membrane as a helical segment; that stretch reads SITLIFFAIMAAAFLYMAMAF. Residues 167–655 lie on the Cytoplasmic side of the membrane; the sequence is NPVIRNEKAM…ASTRAGQNVA (489 aa). The region spanning 433 to 618 is the Lon proteolytic domain; that stretch reads GSVVGMVNGL…EDVLKVALVN (186 aa). Catalysis depends on residues serine 525 and lysine 568.

This sequence belongs to the peptidase S16 family. Archaeal LonB subfamily. Homohexamer. Organized in a ring with a central cavity.

The protein localises to the cell membrane. Its function is as follows. ATP-dependent serine protease that mediates the selective degradation of mutant and abnormal proteins as well as certain short-lived regulatory proteins. Degrades polypeptides processively. The protein is Archaeal Lon protease of Thermoplasma volcanium (strain ATCC 51530 / DSM 4299 / JCM 9571 / NBRC 15438 / GSS1).